The following is a 342-amino-acid chain: Holliday junction branch migration complex subunit RuvB (342 aa).

The interval 1-181 (MEERFLTPKD…FGMVLELEFY (181 aa)) is large ATPase domain (RuvB-L). ATP is bound by residues L20, R21, G62, K65, T66, T67, 128–130 (EDF), R171, Y181, and R218. Residue T66 coordinates Mg(2+). Positions 182–252 (TPDELKQIIK…TVEDAMKIMG (71 aa)) are small ATPAse domain (RuvB-S). Residues 255–342 (AEGLDDMDRK…IGPLWDSTGD (88 aa)) form a head domain (RuvB-H) region. Residues R310 and R315 each contribute to the DNA site.

The protein belongs to the RuvB family. As to quaternary structure, homohexamer. Forms an RuvA(8)-RuvB(12)-Holliday junction (HJ) complex. HJ DNA is sandwiched between 2 RuvA tetramers; dsDNA enters through RuvA and exits via RuvB. An RuvB hexamer assembles on each DNA strand where it exits the tetramer. Each RuvB hexamer is contacted by two RuvA subunits (via domain III) on 2 adjacent RuvB subunits; this complex drives branch migration. In the full resolvosome a probable DNA-RuvA(4)-RuvB(12)-RuvC(2) complex forms which resolves the HJ.

The protein resides in the cytoplasm. It catalyses the reaction ATP + H2O = ADP + phosphate + H(+). Functionally, the RuvA-RuvB-RuvC complex processes Holliday junction (HJ) DNA during genetic recombination and DNA repair, while the RuvA-RuvB complex plays an important role in the rescue of blocked DNA replication forks via replication fork reversal (RFR). RuvA specifically binds to HJ cruciform DNA, conferring on it an open structure. The RuvB hexamer acts as an ATP-dependent pump, pulling dsDNA into and through the RuvAB complex. RuvB forms 2 homohexamers on either side of HJ DNA bound by 1 or 2 RuvA tetramers; 4 subunits per hexamer contact DNA at a time. Coordinated motions by a converter formed by DNA-disengaged RuvB subunits stimulates ATP hydrolysis and nucleotide exchange. Immobilization of the converter enables RuvB to convert the ATP-contained energy into a lever motion, pulling 2 nucleotides of DNA out of the RuvA tetramer per ATP hydrolyzed, thus driving DNA branch migration. The RuvB motors rotate together with the DNA substrate, which together with the progressing nucleotide cycle form the mechanistic basis for DNA recombination by continuous HJ branch migration. Branch migration allows RuvC to scan DNA until it finds its consensus sequence, where it cleaves and resolves cruciform DNA. The polypeptide is Holliday junction branch migration complex subunit RuvB (Kosmotoga olearia (strain ATCC BAA-1733 / DSM 21960 / TBF 19.5.1)).